We begin with the raw amino-acid sequence, 122 residues long: Large ribosomal subunit protein bL12 (122 aa).

It belongs to the bacterial ribosomal protein bL12 family. In terms of assembly, homodimer. Part of the ribosomal stalk of the 50S ribosomal subunit. Forms a multimeric L10(L12)X complex, where L10 forms an elongated spine to which 2 to 4 L12 dimers bind in a sequential fashion. Binds GTP-bound translation factors.

In terms of biological role, forms part of the ribosomal stalk which helps the ribosome interact with GTP-bound translation factors. Is thus essential for accurate translation. The chain is Large ribosomal subunit protein bL12 from Pseudomonas aeruginosa (strain LESB58).